Here is a 686-residue protein sequence, read N- to C-terminus: Proprotein convertase subtilisin/kexin type 9 (686 aa).

The N-terminal stretch at 1–28 (MGTVSSRRLWWPLPLLLLLLLGPAGTRA) is a signal peptide. Residues 29–150 (QEDDDDDYEE…IEEDSSVFAQ (122 aa)) constitute a propeptide that is removed on maturation. At Tyr-36 the chain carries Sulfotyrosine. The residue at position 45 (Ser-45) is a Phosphoserine. Residues 75–147 (TYVVVLKEET…VDYIEEDSSV (73 aa)) form the Inhibitor I9 domain. A Peptidase S8 domain is found at 153–459 (PWNLERITPA…GWQLFCRTVW (307 aa)). Catalysis depends on charge relay system residues Asp-184 and His-224. Cystine bridges form between Cys-221/Cys-253 and Cys-321/Cys-356. Ser-384 (charge relay system) is an active-site residue. The tract at residues 448–686 (GEGWQLFCRT…CRSQHLAQAS (239 aa)) is C-terminal domain. 3 disulfide bridges follow: Cys-455–Cys-525, Cys-475–Cys-524, and Cys-484–Cys-507. Asn-531 carries N-linked (GlcNAc...) asparagine glycosylation. Cystine bridges form between Cys-532/Cys-599, Cys-550/Cys-598, Cys-560/Cys-586, Cys-606/Cys-677, Cys-624/Cys-676, and Cys-633/Cys-652. Ser-686 is subject to Phosphoserine.

This sequence belongs to the peptidase S8 family. As to quaternary structure, monomer. Can self-associate to form dimers and higher multimers which may have increased LDLR degrading activity. The precursor protein but not the mature protein may form multimers. Interacts with APOB, VLDLR, LRP8/APOER2 and BACE1. The full-length immature form (pro-PCSK9) interacts with SCNN1A, SCNN1B and SCNN1G. The pro-PCSK9 form (via C-terminal domain) interacts with LDLR. Interacts (via the C-terminal domain) with ANXA2 (via repeat Annexin 1); the interaction inhibits the degradation of LDLR. Ca(2+) serves as cofactor. In terms of processing, cleavage by furin and PCSK5 generates a truncated inactive protein that is unable to induce LDLR degradation. Undergoes autocatalytic cleavage in the endoplasmic reticulum to release the propeptide from the N-terminus and the cleavage of the propeptide is strictly required for its maturation and activation. The cleaved propeptide however remains associated with the catalytic domain through non-covalent interactions, preventing potential substrates from accessing its active site. As a result, it is secreted from cells as a propeptide-containing, enzymatically inactive protein. Post-translationally, phosphorylation protects the propeptide against proteolysis.

The protein resides in the cytoplasm. It localises to the secreted. Its subcellular location is the endosome. It is found in the lysosome. The protein localises to the cell surface. The protein resides in the endoplasmic reticulum. It localises to the golgi apparatus. With respect to regulation, its proteolytic activity is autoinhibited by the non-covalent binding of the propeptide to the catalytic domain. Inhibited by EGTA. Functionally, crucial player in the regulation of plasma cholesterol homeostasis. Binds to low-density lipid receptor family members: low density lipoprotein receptor (LDLR), very low density lipoprotein receptor (VLDLR), apolipoprotein E receptor (LRP1/APOER) and apolipoprotein receptor 2 (LRP8/APOER2), and promotes their degradation in intracellular acidic compartments. Acts via a non-proteolytic mechanism to enhance the degradation of the hepatic LDLR through a clathrin LDLRAP1/ARH-mediated pathway. May prevent the recycling of LDLR from endosomes to the cell surface or direct it to lysosomes for degradation. Can induce ubiquitination of LDLR leading to its subsequent degradation. Inhibits intracellular degradation of APOB via the autophagosome/lysosome pathway in a LDLR-independent manner. Involved in the disposal of non-acetylated intermediates of BACE1 in the early secretory pathway. Inhibits epithelial Na(+) channel (ENaC)-mediated Na(+) absorption by reducing ENaC surface expression primarily by increasing its proteasomal degradation. Regulates neuronal apoptosis via modulation of LRP8/APOER2 levels and related anti-apoptotic signaling pathways. The polypeptide is Proprotein convertase subtilisin/kexin type 9 (PCSK9) (Saguinus labiatus (Red-chested mustached tamarin)).